The sequence spans 307 residues: Homoserine kinase (307 aa).

Pro-86–Ala-96 contributes to the ATP binding site.

It belongs to the GHMP kinase family. Homoserine kinase subfamily.

The protein resides in the cytoplasm. It carries out the reaction L-homoserine + ATP = O-phospho-L-homoserine + ADP + H(+). Its pathway is amino-acid biosynthesis; L-threonine biosynthesis; L-threonine from L-aspartate: step 4/5. In terms of biological role, catalyzes the ATP-dependent phosphorylation of L-homoserine to L-homoserine phosphate. The sequence is that of Homoserine kinase from Petrotoga mobilis (strain DSM 10674 / SJ95).